Here is a 241-residue protein sequence, read N- to C-terminus: Geranylgeranylglyceryl phosphate synthase (241 aa).

Mg(2+) is bound by residues aspartate 19 and serine 46. Sn-glycerol 1-phosphate is bound by residues 167-173, 198-199, and 220-221; these read YLEAGSG, GG, and GT.

The protein belongs to the GGGP/HepGP synthase family. Group II subfamily. The cofactor is Mg(2+).

The protein resides in the cytoplasm. The catalysed reaction is sn-glycerol 1-phosphate + (2E,6E,10E)-geranylgeranyl diphosphate = sn-3-O-(geranylgeranyl)glycerol 1-phosphate + diphosphate. Its pathway is membrane lipid metabolism; glycerophospholipid metabolism. Prenyltransferase that catalyzes the transfer of the geranylgeranyl moiety of geranylgeranyl diphosphate (GGPP) to the C3 hydroxyl of sn-glycerol-1-phosphate (G1P). This reaction is the first ether-bond-formation step in the biosynthesis of archaeal membrane lipids. This chain is Geranylgeranylglyceryl phosphate synthase, found in Pyrobaculum calidifontis (strain DSM 21063 / JCM 11548 / VA1).